Reading from the N-terminus, the 438-residue chain is Probable trafficking protein particle complex subunit 13 homolog (438 aa).

The protein belongs to the TRAPPC13 family.

The chain is Probable trafficking protein particle complex subunit 13 homolog from Drosophila melanogaster (Fruit fly).